Consider the following 376-residue polypeptide: Sulfate/thiosulfate import ATP-binding protein CysA (376 aa).

In terms of domain architecture, ABC transporter spans 3-237; the sequence is IRLDNISKHF…PNSRFVFDFF (235 aa). 35 to 42 is a binding site for ATP; sequence GPSGSGKT.

This sequence belongs to the ABC transporter superfamily. Sulfate/tungstate importer (TC 3.A.1.6) family. In terms of assembly, the complex is composed of two ATP-binding proteins (CysA), two transmembrane proteins (CysT and CysW) and a solute-binding protein (CysP).

It localises to the cell inner membrane. The enzyme catalyses sulfate(out) + ATP + H2O = sulfate(in) + ADP + phosphate + H(+). It catalyses the reaction thiosulfate(out) + ATP + H2O = thiosulfate(in) + ADP + phosphate + H(+). Part of the ABC transporter complex CysAWTP involved in sulfate/thiosulfate import. Responsible for energy coupling to the transport system. This Vibrio cholerae serotype O1 (strain ATCC 39315 / El Tor Inaba N16961) protein is Sulfate/thiosulfate import ATP-binding protein CysA.